Consider the following 131-residue polypeptide: Peptide methionine sulfoxide reductase MsrB (131 aa).

The MsrB domain occupies 8 to 130; sequence LDEWRSMLDP…NSVCIDLRPR (123 aa). The Zn(2+) site is built by Cys-47, Cys-50, Cys-96, and Cys-99. Cys-119 acts as the Nucleophile in catalysis.

The protein belongs to the MsrB Met sulfoxide reductase family. Zn(2+) is required as a cofactor.

The enzyme catalyses L-methionyl-[protein] + [thioredoxin]-disulfide + H2O = L-methionyl-(R)-S-oxide-[protein] + [thioredoxin]-dithiol. The polypeptide is Peptide methionine sulfoxide reductase MsrB (Pseudomonas putida (strain ATCC 47054 / DSM 6125 / CFBP 8728 / NCIMB 11950 / KT2440)).